The sequence spans 388 residues: LL-diaminopimelate aminotransferase (388 aa).

Y16 and G41 together coordinate substrate. Residues Y70, 104–105 (SK), Y129, N179, Y210, and 239–241 (SLS) each bind pyridoxal 5'-phosphate. Residues K105, Y129, and N179 each contribute to the substrate site. N6-(pyridoxal phosphate)lysine is present on K242. Pyridoxal 5'-phosphate is bound at residue R250. R368 contributes to the substrate binding site.

Belongs to the class-I pyridoxal-phosphate-dependent aminotransferase family. LL-diaminopimelate aminotransferase subfamily. Homodimer. The cofactor is pyridoxal 5'-phosphate.

It carries out the reaction (2S,6S)-2,6-diaminopimelate + 2-oxoglutarate = (S)-2,3,4,5-tetrahydrodipicolinate + L-glutamate + H2O + H(+). Its pathway is amino-acid biosynthesis; L-lysine biosynthesis via DAP pathway; LL-2,6-diaminopimelate from (S)-tetrahydrodipicolinate (aminotransferase route): step 1/1. Functionally, involved in the synthesis of meso-diaminopimelate (m-DAP or DL-DAP), required for both lysine and peptidoglycan biosynthesis. Catalyzes the direct conversion of tetrahydrodipicolinate to LL-diaminopimelate. This Nitratidesulfovibrio vulgaris (strain DP4) (Desulfovibrio vulgaris) protein is LL-diaminopimelate aminotransferase.